The sequence spans 132 residues: Small ribosomal subunit protein uS8c (132 aa).

This sequence belongs to the universal ribosomal protein uS8 family. In terms of assembly, part of the 30S ribosomal subunit.

The protein localises to the plastid. It is found in the chloroplast. Functionally, one of the primary rRNA binding proteins, it binds directly to 16S rRNA central domain where it helps coordinate assembly of the platform of the 30S subunit. The protein is Small ribosomal subunit protein uS8c (rps8) of Ceratophyllum demersum (Rigid hornwort).